The sequence spans 200 residues: Potassium-transporting ATPase KdpC subunit (200 aa).

The helical transmembrane segment at 13–33 (ITLIFWLITAIIYPLAILVVG) threads the bilayer.

It belongs to the KdpC family. In terms of assembly, the system is composed of three essential subunits: KdpA, KdpB and KdpC.

The protein localises to the cell membrane. Part of the high-affinity ATP-driven potassium transport (or Kdp) system, which catalyzes the hydrolysis of ATP coupled with the electrogenic transport of potassium into the cytoplasm. This subunit acts as a catalytic chaperone that increases the ATP-binding affinity of the ATP-hydrolyzing subunit KdpB by the formation of a transient KdpB/KdpC/ATP ternary complex. This Anabaena sp. (strain L31) protein is Potassium-transporting ATPase KdpC subunit.